Here is a 212-residue protein sequence, read N- to C-terminus: Large ribosomal subunit protein uL4 (212 aa).

Over residues 43–52 (NNRQGTASTK) the composition is skewed to polar residues. Positions 43-77 (NNRQGTASTKTRSEVRGGGRKPWRQKGTGRARAGS) are disordered. The span at 60-71 (GGRKPWRQKGTG) shows a compositional bias: basic residues.

Belongs to the universal ribosomal protein uL4 family. In terms of assembly, part of the 50S ribosomal subunit.

One of the primary rRNA binding proteins, this protein initially binds near the 5'-end of the 23S rRNA. It is important during the early stages of 50S assembly. It makes multiple contacts with different domains of the 23S rRNA in the assembled 50S subunit and ribosome. Functionally, forms part of the polypeptide exit tunnel. This is Large ribosomal subunit protein uL4 from Trichodesmium erythraeum (strain IMS101).